A 637-amino-acid polypeptide reads, in one-letter code: Chaperone protein HtpG (637 aa).

Residues 1–345 (MSHQETHGFQ…SNDLPLNVSR (345 aa)) form an a; substrate-binding region. The interval 346 to 562 (EILQDNKVTR…EGEMSSQMIK (217 aa)) is b. Residues 563–637 (LMQAAGQPVP…VNQMLLKSVG (75 aa)) are c.

Belongs to the heat shock protein 90 family. In terms of assembly, homodimer.

Its subcellular location is the cytoplasm. In terms of biological role, molecular chaperone. Has ATPase activity. This Shewanella amazonensis (strain ATCC BAA-1098 / SB2B) protein is Chaperone protein HtpG.